The chain runs to 341 residues: S-adenosylmethionine:tRNA ribosyltransferase-isomerase (341 aa).

Belongs to the QueA family. In terms of assembly, monomer.

The protein localises to the cytoplasm. It catalyses the reaction 7-aminomethyl-7-carbaguanosine(34) in tRNA + S-adenosyl-L-methionine = epoxyqueuosine(34) in tRNA + adenine + L-methionine + 2 H(+). Its pathway is tRNA modification; tRNA-queuosine biosynthesis. Transfers and isomerizes the ribose moiety from AdoMet to the 7-aminomethyl group of 7-deazaguanine (preQ1-tRNA) to give epoxyqueuosine (oQ-tRNA). The sequence is that of S-adenosylmethionine:tRNA ribosyltransferase-isomerase from Staphylococcus saprophyticus subsp. saprophyticus (strain ATCC 15305 / DSM 20229 / NCIMB 8711 / NCTC 7292 / S-41).